Reading from the N-terminus, the 405-residue chain is Farnesyl pyrophosphate synthase (405 aa).

The Mg(2+) site is built by D158 and D162. Positions D158–D162 match the DDXXD motif motif.

The protein belongs to the FPP/GGPP synthase family. Mg(2+) is required as a cofactor.

It carries out the reaction isopentenyl diphosphate + (2E)-geranyl diphosphate = (2E,6E)-farnesyl diphosphate + diphosphate. Its pathway is pheromone biosynthesis. Functionally, farnesyl pyrophosphate synthase involved in murgantiol biosynthesis, a male-released aggregation pheromone, by catalyzing the formation of (2E,6E)-farnesyl diphosphate. This is Farnesyl pyrophosphate synthase from Murgantia histrionica (Harlequin bug).